A 1492-amino-acid polypeptide reads, in one-letter code: MIKHILQVEETKKIFEEIDDNEYEKIQDSRKNDDFIVDDDGYGYRDHGGEIWDRDGDVEEVGKKKKKKQNNHDPNENIMNYMMPASTLKKKSNAASTNPSAQQKPKVSVEQSRDIMNNLFQQLDAKDVDELEDVNEAKNMFVQEMNRPVAFNKEEDFNNRYSVTLESREEQERRRQSEQLKQQANIGQNQSDVNPFSKKRKLDEFQQVQANSYQSKQNSHSVSKSKPGDHEMANHADGVDLNLLAIDDTKMTDSHPSEIITQNQRASAVSSVNQQIMESTNGKNQLEKNDTEWQQMKEKNAVFNQDLRMNDNALMSNQQDYPLPLNEDGTLSFYWIDAHEENNGADLFVFGKIYQHEERKFVSCSIKVNGMQRELFVLPKMSGKSRAAMTTEEEKEQARKVMMELEGVRKRFPAITKWRCKPVTRKYAFELPIQHGEHQFVKIKYDATFPSLPSTVQGNTFECIFGANQSMLESFILKRKIRGPCWMTIRNPQKVTDFRRTWCKQEILVSNPKDIEITLDDLNKTELPPLTSVTFAIKTCRSSQNTNEIAMLSCIVNENISQEGPSKIDVHKSFTLLRKLDGKPMPIEYERAFRDKKDSFIQFFQHERQLIEAFVAKIYQLDPDLMVAHNLCGGMFDLLLARIQMLKISHWSRIGRLKKNQIPNKKSDQSGANYGGSQWIPRQVTCGRLLVDTFLTAKELIRETNYDLTHLAKVQLQKDRIDFDDDLLPTFYVQMAKLFQLIDHTEKDAYLTLQLMNHLQVIPLTKQLTNIAGNLWFRSLQNARAERNEMLLLHEFKKKKFVLPDKKQLNAKDLKKNMFADEYEEGDGKTKGGKRKKAAYAGGLVIEPKAGFYDNIILLLDFNSLYPSIIQEYNLCFTTVNRRPTKNFDGSEMKNQYKKGENGEEEVDIEEADLPDKNVNLKDAVLPMVLRDLVQKRKAVKDKMKTEKDHVKLSQLEIRQKAIKLTANSMYGCLGFGSSRFHAQAIAALITRTGRETLLRTKDIAENKLGFNVVYGDTDSIMINTGSNQLQQALEMGKRLKGEVNCLYKCLEIEIDGVFKSLLLLKKKKYAALKYENFLSPAEVKVVQEMKGLDMVRRDWCPLSKRVGRYVLDQILSGKQREEVVLNLNEFLSNIGNELKEGTIKLNEFIITKQITKAISDYNDIKGQPHVAVAKRLRDQGKSENQLVNNFIPYVICQQTYGDTTKSSTALSDKAYHPDEVISSRGKVTIDSDWYVSTQLLPPITRLIEHIEGIEVEFVAQCLGLDPKKYRYHSEKKNTDNPTDDPLIVSNPVLQTETERSLKNRTVAELNIKCPHCAHNYHFPGILVPSSNNTELTGLACVKCNQRIPDAYMLNRLNLFLKQLTALYYLGMKECKEPQCGMKTNQLLLNNKCIVKGCKGKMNSEYSELRINDTLRYLEGLFNVKKFLIENEKYRKKYEKPELVPNFQSFKELQKKVESFMIRSGYNKVDLGNIFGFMSKGANPHQQKMSIF.

Disordered stretches follow at residues 34–112 (DFIV…VEQS), 162–195 (SVTL…DVNP), and 210–234 (ANSY…EMAN). Residues 42–55 (YGYRDHGGEIWDRD) show a composition bias toward basic and acidic residues. Residues 93–105 (NAASTNPSAQQKP) show a composition bias toward polar residues. Basic and acidic residues predominate over residues 166–178 (ESREEQERRRQSE). Polar residues-rich tracts occupy residues 184–194 (ANIGQNQSDVN) and 210–224 (ANSY…SVSK). The Zn(2+) site is built by Cys1314, Cys1317, Cys1341, Cys1344, Cys1375, Cys1380, Cys1393, and Cys1398. Residues 1314 to 1344 (CPHCAHNYHFPGILVPSSNNTELTGLACVKC) form a CysA-type zinc finger. The CysB motif motif lies at 1375–1398 (CKEPQCGMKTNQLLLNNKCIVKGC).

The protein belongs to the DNA polymerase type-B family.

Its subcellular location is the nucleus. The catalysed reaction is DNA(n) + a 2'-deoxyribonucleoside 5'-triphosphate = DNA(n+1) + diphosphate. Its function is as follows. Polymerase alpha in a complex with DNA primase is a replicative polymerase. The protein is DNA polymerase alpha catalytic subunit of Sterkiella nova (Ciliate).